Here is a 155-residue protein sequence, read N- to C-terminus: Cytochrome P450 (155 aa).

Cysteine 99 is a heme binding site.

This sequence belongs to the cytochrome P450 family. Requires heme as cofactor.

The protein is Cytochrome P450 of Helianthus annuus (Common sunflower).